We begin with the raw amino-acid sequence, 784 residues long: Toll-like receptor 2 (784 aa).

The first 24 residues, 1 to 24 (MLHVLWTFWILVAMTDLSRKGCSA), serve as a signal peptide directing secretion. The Extracellular portion of the chain corresponds to 25-588 (QASLSCDAAG…RPSVLECHQT (564 aa)). A disulfide bridge links cysteine 30 with cysteine 36. LRR repeat units lie at residues 54 to 77 (MKSLDLSNNKITSIGHGDLRGCVN), 78 to 101 (LRALILQSSGINTIEEDAFSSLSK), 102 to 125 (LEYLDLSDNHLSNLSSSWFRPLSS), 126 to 150 (LKYLNLLGNPYRILGETPLFLNLTH), 151 to 175 (LQTLRVGNVATFSGIRRTDFAGLTS), 176 to 199 (LDELEIKALSLQNYEPGSLQSIQS), 200 to 223 (IHHLTFHLSQSDFLLGVFEDTLSS), 224 to 250 (VGYLELRDANLDSFYFSELSTDEMNSP), 251 to 278 (MKKLAFQNADLTDESFNELLKLLRYTPE), 279 to 308 (LLEVEFDDCTLNGVGDFQPSESDVVRELGK), 309 to 337 (VETLIIRRLHIPRFYSFYDLSTVYTLLEK), 338 to 361 (VKRITVENSKVFLVPCLFSQHLKS), 362 to 388 (LEFLDLSENLMVEEYLKNAACEGSWPS), 389 to 414 (LQTLILRQNRLKSIERTGKILLTLKN), 415 to 437 (LTALDISRNSFQSMPDSCQWPGK), 438 to 457 (MRFLNLSSTGIQAVKMCIPQ), 458 to 478 (TLEVLDVSNNNLISFSLFLPL), 479 to 500 (LRELYISRNKLHTLPDASLFPV), and 501 to 524 (LLVMKIRENAISTFSKDQLSSFPK). N-linked (GlcNAc...) asparagine glycosylation is found at asparagine 114 and asparagine 147. Residues cysteine 353 and cysteine 382 are joined by a disulfide bond. An N-linked (GlcNAc...) asparagine glycan is attached at asparagine 414. Cysteine 432 and cysteine 454 form a disulfide bridge. Asparagine 442 carries N-linked (GlcNAc...) asparagine glycosylation. The 55-residue stretch at 525-579 (LVSLEAGGNHFICSCELLSFTLEHPALVQVLAGWPDSYLCDSPSRLRGQRVQDAR) folds into the LRRCT domain. A helical membrane pass occupies residues 589-609 (LLVSGVCCALVLLILLIGGLC). The Cytoplasmic portion of the chain corresponds to 610–784 (HHFHGLWYLR…WVNLRTAIKS (175 aa)). Residues 639-782 (ICYDAFVSYS…VFWVNLRTAI (144 aa)) form the TIR domain. Lysine 754 is covalently cross-linked (Glycyl lysine isopeptide (Lys-Gly) (interchain with G-Cter in ubiquitin)). Residues 761–778 (YLEWPLDEGQQEVFWVNL) carry the ATG16L1-binding motif motif.

The protein belongs to the Toll-like receptor family. As to quaternary structure, interacts with LY96, TLR1 and TLR6 (via extracellular domain). TLR2 seems to exist in heterodimers with either TLR1 or TLR6 before stimulation by the ligand. The heterodimers form bigger oligomers in response to their corresponding ligands as well as further heterotypic associations with other receptors such as CD14 and/or CD36. Binds MYD88 (via TIR domain). Interacts with TICAM1. Interacts with CNPY3. Interacts with ATG16L1. Interacts with PPP1R11. Interacts with TICAM2. Interacts with TIRAP. Post-translationally, ubiquitinated at Lys-754 by PPP1R11, leading to its degradation. Deubiquitinated by USP2. Glycosylation of Asn-442 is critical for secretion of the N-terminal ectodomain of TLR2.

The protein localises to the membrane. It localises to the cytoplasmic vesicle. It is found in the phagosome membrane. The protein resides in the membrane raft. Its function is as follows. Cooperates with LY96 to mediate the innate immune response to bacterial lipoproteins and other microbial cell wall components. Cooperates with TLR1 or TLR6 to mediate the innate immune response to bacterial lipoproteins or lipopeptides. Acts via MYD88 and TRAF6, leading to NF-kappa-B activation, cytokine secretion and the inflammatory response. May also promote apoptosis in response to lipoproteins. Forms activation clusters composed of several receptors depending on the ligand, these clusters trigger signaling from the cell surface and subsequently are targeted to the Golgi in a lipid-raft dependent pathway. Forms the cluster TLR2:TLR6:CD14:CD36 in response to diacylated lipopeptides and TLR2:TLR1:CD14 in response to triacylated lipopeptides. The protein is Toll-like receptor 2 (TLR2) of Cricetulus griseus (Chinese hamster).